The following is a 97-amino-acid chain: MRQLLLLPIRFYQYAISPMMASHCRHYPTCSQYAVEAIQHHGPLKGGYLATARLLRCHPWAEGGYDPVPGTELNTAPRSGQACNPTESTHSTTQTRH.

The segment at 68–97 (VPGTELNTAPRSGQACNPTESTHSTTQTRH) is disordered. A compositionally biased stretch (polar residues) spans 72 to 97 (ELNTAPRSGQACNPTESTHSTTQTRH).

It belongs to the UPF0161 family.

Its subcellular location is the cell inner membrane. Could be involved in insertion of integral membrane proteins into the membrane. The sequence is that of Putative membrane protein insertion efficiency factor from Marinobacter nauticus (strain ATCC 700491 / DSM 11845 / VT8) (Marinobacter aquaeolei).